The primary structure comprises 72 residues: Translation initiation factor IF-1 (72 aa).

The S1-like domain maps to 1-72; the sequence is MTKEDCIEMQ…SKGRIIFRSR (72 aa).

This sequence belongs to the IF-1 family. In terms of assembly, component of the 30S ribosomal translation pre-initiation complex which assembles on the 30S ribosome in the order IF-2 and IF-3, IF-1 and N-formylmethionyl-tRNA(fMet); mRNA recruitment can occur at any time during PIC assembly.

It is found in the cytoplasm. Its function is as follows. One of the essential components for the initiation of protein synthesis. Stabilizes the binding of IF-2 and IF-3 on the 30S subunit to which N-formylmethionyl-tRNA(fMet) subsequently binds. Helps modulate mRNA selection, yielding the 30S pre-initiation complex (PIC). Upon addition of the 50S ribosomal subunit IF-1, IF-2 and IF-3 are released leaving the mature 70S translation initiation complex. In Buchnera aphidicola subsp. Baizongia pistaciae (strain Bp), this protein is Translation initiation factor IF-1.